Here is a 406-residue protein sequence, read N- to C-terminus: Argininosuccinate synthase (406 aa).

ATP is bound by residues 11–19 and Ala38; that span reads AYSGGLDTS. Tyr91 and Ser96 together coordinate L-citrulline. ATP is bound at residue Gly121. L-aspartate-binding residues include Thr123, Asn127, and Asp128. Residue Asn127 participates in L-citrulline binding. L-citrulline contacts are provided by Arg131, Ser181, Ser190, Glu266, and Tyr278.

Belongs to the argininosuccinate synthase family. Type 1 subfamily. As to quaternary structure, homotetramer.

Its subcellular location is the cytoplasm. The enzyme catalyses L-citrulline + L-aspartate + ATP = 2-(N(omega)-L-arginino)succinate + AMP + diphosphate + H(+). Its pathway is amino-acid biosynthesis; L-arginine biosynthesis; L-arginine from L-ornithine and carbamoyl phosphate: step 2/3. The chain is Argininosuccinate synthase from Campylobacter hominis (strain ATCC BAA-381 / DSM 21671 / CCUG 45161 / LMG 19568 / NCTC 13146 / CH001A).